The chain runs to 661 residues: Protein WHI3 (661 aa).

Residues 14–31 (ASSSDNVVSSTTNTHNIS) show a composition bias toward low complexity. The segment at 14-58 (ASSSDNVVSSTTNTHNISPSHRSSLNLNTTSHPHEASGRGSASGE) is disordered. Residues 32 to 44 (PSHRSSLNLNTTS) show a composition bias toward polar residues. Ser-231 is subject to Phosphoserine. Low complexity-rich tracts occupy residues 237–272 (DPFSNDSPLSQQQSQQQQQQPQQPQQHSTQKHSPQQ), 383–409 (NTSANANASSNNGASNNGANQALSASS), and 496–508 (KNNSTTSLSSNIT). 4 disordered regions span residues 237-280 (DPFS…QVNS), 383-410 (NTSANANASSNNGASNNGANQALSASSQ), 469-508 (EHMYPVNQSNTPQKVPPARLSSSRNSHKNNSTTSLSSNIT), and 613-661 (SSKG…HIKN). Residues 538–625 (NTLYVGNLPS…GGIRLSFSKN (88 aa)) form the RRM domain. The segment covering 628–647 (GVRGPNSRRGGSGNPNPNVN) has biased composition (low complexity). Positions 648-661 (MLSSYNSNVGHIKN) are enriched in polar residues.

Functionally, involved in size control and cell cycle. In Saccharomyces cerevisiae (strain ATCC 204508 / S288c) (Baker's yeast), this protein is Protein WHI3 (WHI3).